Reading from the N-terminus, the 201-residue chain is CASP-like protein 1E1 (201 aa).

Topologically, residues 1–36 are cytoplasmic; the sequence is MESQFRPGFDVSQGAGGRASKFGDVVAPTSSTQLPG. A helical membrane pass occupies residues 37 to 57; that stretch reads IILRIVAIVLTFISAVVMGAA. Topologically, residues 58–87 are extracellular; sequence RQTTTVTGIDAETALLTSITVTVKSTYSAA. The chain crosses the membrane as a helical span at residues 88-108; that stretch reads YVYFVVANVLVFFYSVVSLVL. Residues 109-127 lie on the Cytoplasmic side of the membrane; sequence SMVNKARLTSMSLPFSIAD. A helical membrane pass occupies residues 128–148; sequence LLMVVLLFSSNGAAAAISVVA. At 149-173 the chain is on the extracellular side; it reads EKGQQNLAGWDKICNLFGGLCARVN. A helical transmembrane segment spans residues 174 to 194; the sequence is AAIVLSMLASVAYVILVVFGM. At 195–201 the chain is on the cytoplasmic side; it reads ANLRRSQ.

Belongs to the Casparian strip membrane proteins (CASP) family. Homodimer and heterodimers.

Its subcellular location is the cell membrane. In Musa acuminata (Banana), this protein is CASP-like protein 1E1.